We begin with the raw amino-acid sequence, 475 residues long: Ribulose bisphosphate carboxylase large chain (475 aa).

The propeptide occupies 1-2 (MS). An N-acetylproline modification is found at Pro3. Lys14 carries the post-translational modification N6,N6,N6-trimethyllysine. Positions 123 and 173 each coordinate substrate. The active-site Proton acceptor is the Lys175. Lys177 is a binding site for substrate. Mg(2+) is bound by residues Lys201, Asp203, and Glu204. Lys201 is subject to N6-carboxylysine. Residue His294 is the Proton acceptor of the active site. Residues Arg295, His327, and Ser379 each coordinate substrate.

Belongs to the RuBisCO large chain family. Type I subfamily. In terms of assembly, heterohexadecamer of 8 large chains and 8 small chains; disulfide-linked. The disulfide link is formed within the large subunit homodimers. Mg(2+) serves as cofactor. In terms of processing, the disulfide bond which can form in the large chain dimeric partners within the hexadecamer appears to be associated with oxidative stress and protein turnover.

It is found in the plastid. Its subcellular location is the chloroplast. The catalysed reaction is 2 (2R)-3-phosphoglycerate + 2 H(+) = D-ribulose 1,5-bisphosphate + CO2 + H2O. It catalyses the reaction D-ribulose 1,5-bisphosphate + O2 = 2-phosphoglycolate + (2R)-3-phosphoglycerate + 2 H(+). Its function is as follows. RuBisCO catalyzes two reactions: the carboxylation of D-ribulose 1,5-bisphosphate, the primary event in carbon dioxide fixation, as well as the oxidative fragmentation of the pentose substrate in the photorespiration process. Both reactions occur simultaneously and in competition at the same active site. This is Ribulose bisphosphate carboxylase large chain from Pinus radiata (Monterey pine).